We begin with the raw amino-acid sequence, 649 residues long: Glycerol-3-phosphate dehydrogenase, mitochondrial (649 aa).

Position 69-97 (69-97) interacts with FAD; the sequence is DVLIIGGGATGTGCALDAATRGLNVALVE.

This sequence belongs to the FAD-dependent glycerol-3-phosphate dehydrogenase family. FAD is required as a cofactor.

It is found in the mitochondrion inner membrane. Its subcellular location is the mitochondrion intermembrane space. It catalyses the reaction a quinone + sn-glycerol 3-phosphate = dihydroxyacetone phosphate + a quinol. Its pathway is polyol metabolism; glycerol degradation via glycerol kinase pathway; glycerone phosphate from sn-glycerol 3-phosphate (anaerobic route): step 1/1. The sequence is that of Glycerol-3-phosphate dehydrogenase, mitochondrial (GUT2) from Saccharomyces cerevisiae (strain ATCC 204508 / S288c) (Baker's yeast).